The primary structure comprises 132 residues: Small ribosomal subunit protein uS8 (132 aa).

The protein belongs to the universal ribosomal protein uS8 family. In terms of assembly, part of the 30S ribosomal subunit. Contacts proteins S5 and S12.

Its function is as follows. One of the primary rRNA binding proteins, it binds directly to 16S rRNA central domain where it helps coordinate assembly of the platform of the 30S subunit. This chain is Small ribosomal subunit protein uS8, found in Corynebacterium diphtheriae (strain ATCC 700971 / NCTC 13129 / Biotype gravis).